The chain runs to 100 residues: Class II hydrophobin FOXG_02746 (100 aa).

The signal sequence occupies residues 1–17; sequence MQFYTIVSLFLAGTAYA. Cystine bridges form between Cys29-Cys79, Cys40-Cys70, Cys41-Cys53, and Cys80-Cys92.

It belongs to the cerato-ulmin hydrophobin family. In terms of assembly, homodimer. Homodimers further self-assemble to form highly ordered films at water-air interfaces through intermolecular interactions.

Its subcellular location is the secreted. The protein resides in the cell wall. Functionally, aerial growth, conidiation, and dispersal of filamentous fungi in the environment rely upon a capability of their secreting small amphipathic proteins called hydrophobins (HPBs) with low sequence identity. Class I can self-assemble into an outermost layer of rodlet bundles on aerial cell surfaces, conferring cellular hydrophobicity that supports fungal growth, development and dispersal; whereas Class II form highly ordered films at water-air interfaces through intermolecular interactions but contribute nothing to the rodlet structure. FOXG_02746 is a class II hydrophobin that is likely required for plant colonization. The chain is Class II hydrophobin FOXG_02746 from Fusarium oxysporum f. sp. lycopersici (strain 4287 / CBS 123668 / FGSC 9935 / NRRL 34936) (Fusarium vascular wilt of tomato).